Consider the following 300-residue polypeptide: Glutamyl-Q tRNA(Asp) synthetase (300 aa).

L-glutamate contacts are provided by residues Arg8–Thr12 and Asp44. Residues Pro11–Ser21 carry the 'HIGH' region motif. Positions 100, 102, 122, and 126 each coordinate Zn(2+). Residues Tyr181 and Arg199 each coordinate L-glutamate. The 'KMSKS' region signature appears at Lys237 to Gln241. Lys240 provides a ligand contact to ATP.

This sequence belongs to the class-I aminoacyl-tRNA synthetase family. GluQ subfamily. Zn(2+) is required as a cofactor.

In terms of biological role, catalyzes the tRNA-independent activation of glutamate in presence of ATP and the subsequent transfer of glutamate onto a tRNA(Asp). Glutamate is transferred on the 2-amino-5-(4,5-dihydroxy-2-cyclopenten-1-yl) moiety of the queuosine in the wobble position of the QUC anticodon. In Synechococcus sp. (strain ATCC 27144 / PCC 6301 / SAUG 1402/1) (Anacystis nidulans), this protein is Glutamyl-Q tRNA(Asp) synthetase.